We begin with the raw amino-acid sequence, 181 residues long: Adenylate kinase (181 aa).

7-15 contacts ATP; the sequence is GVAGVGKTT.

Belongs to the archaeal adenylate kinase family.

The protein resides in the cytoplasm. The enzyme catalyses AMP + ATP = 2 ADP. In Thermoplasma volcanium (strain ATCC 51530 / DSM 4299 / JCM 9571 / NBRC 15438 / GSS1), this protein is Adenylate kinase (adkA).